A 963-amino-acid chain; its full sequence is VPS35 endosomal protein-sorting factor-like (963 aa).

The disordered stretch occupies residues 43–69 (SKTKKVNRKGSTSSTSSSSSSSVVDPL). The segment covering 53 to 69 (STSSTSSSSSSSVVDPL) has biased composition (low complexity). A Phosphoserine modification is found at Ser265. A helical membrane pass occupies residues 703–719 (ACVAYCFITIPSLAGIF).

The protein belongs to the VPS35L family. As to quaternary structure, component of the heterotrimeric retriever complex formed by VPS26C, VPS29 and VPS35L. Interacts with VPS29. Interacts with COMMD1, CCDC93 and CCDC22; associates with the CCC (COMMD/CCDC22/CCDC93) complex which contains at least COMMD1 (and possibly other COMM domain-containing proteins), CCDC22 and CCDC93. Interacts with WASHC1, WASHC2A and WASHC2C. Interacts with SNX17 and SNX31.

It is found in the membrane. The protein resides in the endosome. Its function is as follows. Acts as a component of the retriever complex. The retriever complex is a heterotrimeric complex related to retromer cargo-selective complex (CSC) and essential for retromer-independent retrieval and recycling of numerous cargos such as integrin alpha-5/beta-1 (ITGA5:ITGB1). The recruitment of the retriever complex to the endosomal membrane involves CCC and WASH complexes. In the endosomes, drives the retrieval and recycling of NxxY-motif-containing cargo proteins by coupling to SNX17, a cargo essential for the homeostatic maintenance of numerous cell surface proteins associated with processes that include cell migration, cell adhesion, nutrient supply and cell signaling. Involved in copper-dependent ATP7A trafficking between the trans-Golgi network and vesicles in the cell periphery; the function is proposed to depend on its association with the CCC complex and cooperation with the WASH complex on early endosomes. Seems not to be required for CCC complex stability. (Microbial infection) The heterotrimeric retriever complex, in collaboration with the CCC complex, mediates the exit of human papillomavirus to the cell surface. This chain is VPS35 endosomal protein-sorting factor-like, found in Homo sapiens (Human).